We begin with the raw amino-acid sequence, 422 residues long: Glutamyl-tRNA reductase (422 aa).

Substrate is bound by residues 49-52 (TCNR), Ser107, 112-114 (EPQ), and Gln118. Cys50 acts as the Nucleophile in catalysis. 187–192 (GAGETI) is an NADP(+) binding site.

Belongs to the glutamyl-tRNA reductase family. In terms of assembly, homodimer.

It carries out the reaction (S)-4-amino-5-oxopentanoate + tRNA(Glu) + NADP(+) = L-glutamyl-tRNA(Glu) + NADPH + H(+). The protein operates within porphyrin-containing compound metabolism; protoporphyrin-IX biosynthesis; 5-aminolevulinate from L-glutamyl-tRNA(Glu): step 1/2. Its function is as follows. Catalyzes the NADPH-dependent reduction of glutamyl-tRNA(Glu) to glutamate 1-semialdehyde (GSA). This chain is Glutamyl-tRNA reductase, found in Pseudomonas paraeruginosa (strain DSM 24068 / PA7) (Pseudomonas aeruginosa (strain PA7)).